A 539-amino-acid chain; its full sequence is G protein-coupled receptor associated sorting protein 3 (539 aa).

Over residues 1–10 (MTGSKNKARA) the composition is skewed to basic residues. 2 disordered regions span residues 1–112 (MTGS…NWFW) and 134–172 (VAKC…EENV). Basic and acidic residues-rich tracts occupy residues 66–80 (VVAE…ESKA) and 88–106 (FNHR…DKPS). A compositionally biased stretch (polar residues) spans 134–146 (VAKCENKPSTSIQ).

It belongs to the GPRASP family. As to quaternary structure, homodimer.

The protein resides in the cytoplasm. Its subcellular location is the nucleus. Functionally, survival and differentiation promoting protein that plays a role in the regulation of neurosynaptogenesis. Induces phosphatase PP2A activity which results in APP dephosphorylation and inhibits BACE1-mediated processing of APP. The sequence is that of G protein-coupled receptor associated sorting protein 3 (Gprasp3) from Mus musculus (Mouse).